Here is a 382-residue protein sequence, read N- to C-terminus: Alkaline serine protease ver112 (382 aa).

An N-terminal signal peptide occupies residues 1-15 (MRLSIIAAVLPLALA). Positions 16 to 102 (APVAEPEIAP…IEQDAIFSIN (87 aa)) are excised as a propeptide. The Inhibitor I9 domain occupies 56 to 99 (SKIPGIERVYENVLNGFSATLSNEELERLRRDPDVESIEQDAIF). One can recognise a Peptidase S8 domain in the interval 111-382 (TWGLTRISHR…VNYLAFNGAT (272 aa)). Intrachain disulfides connect Cys-138-Cys-227 and Cys-282-Cys-353. Catalysis depends on charge relay system residues Asp-143, His-173, and Ser-328.

The protein belongs to the peptidase S8 family.

The protein resides in the secreted. Its activity is regulated as follows. Inhibited by phenylmethylsulfonyl fluoride (PMSF). Serine protease which can degrade the nematode cuticle. The chain is Alkaline serine protease ver112 from Corniculantispora psalliotae (Lecanicillium psalliotae).